Here is a 36-residue protein sequence, read N- to C-terminus: Conotoxin Cal6.1h (36 aa).

Residues 1–7 (GLGRPSR) constitute a propeptide that is removed on maturation. Intrachain disulfides connect cysteine 9–cysteine 25, cysteine 16–cysteine 29, and cysteine 24–cysteine 34.

This sequence belongs to the conotoxin O1 superfamily. As to expression, expressed by the venom duct.

Its subcellular location is the secreted. Functionally, probable neurotoxin with unknown target. Possibly targets ion channels. This is Conotoxin Cal6.1h from Californiconus californicus (California cone).